Here is a 570-residue protein sequence, read N- to C-terminus: Nucleoprotein (570 aa).

Residues 54–241 (MRKEKRDDSD…IEPKKSAINI (188 aa)) form a binding site for the cap structure m7GTP region. Mn(2+)-binding residues include aspartate 390 and glutamate 392. Glutamate 400, cysteine 507, histidine 510, and cysteine 530 together coordinate Zn(2+). Position 534 (aspartate 534) interacts with Mn(2+).

It belongs to the arenaviridae nucleocapsid protein family. In terms of assembly, homomultimerizes to form the nucleocapsid. Binds to viral genomic RNA. Interacts with glycoprotein G2. Interacts with protein Z; this interaction probably directs the encapsidated genome to budding sites. Interacts with protein L; this interaction does not interfere with Z-L interaction. Interacts with host IKBKE (via Protein kinase domain); the interaction inhibits IKBKE kinase activity.

The protein resides in the virion. Its subcellular location is the host cytoplasm. In terms of biological role, encapsidates the genome, protecting it from nucleases. The encapsidated genomic RNA is termed the nucleocapsid (NC). Serves as template for viral transcription and replication. The increased presence of protein N in host cell does not seem to trigger the switch from transcription to replication as observed in other negative strain RNA viruses. Through the interaction with host IKBKE, strongly inhibits the phosphorylation and nuclear translocation of host IRF3, a protein involved in interferon activation pathway, leading to the inhibition of interferon-beta and IRF3-dependent promoters activation. Also encodes a functional 3'-5' exoribonuclease that degrades preferentially dsRNA substrates and thereby participates in the suppression of interferon induction. This Mopeia virus (MOPV) protein is Nucleoprotein.